The primary structure comprises 365 residues: Cyclin-D5-2 (365 aa).

Belongs to the cyclin family. Cyclin D subfamily.

This Oryza sativa subsp. japonica (Rice) protein is Cyclin-D5-2 (CYCD5-2).